Reading from the N-terminus, the 379-residue chain is Carboxypeptidase Y-deficient protein 8 (379 aa).

The segment covering 84–107 has biased composition (low complexity); it reads HGSGNSSSKKVTSSTSSSSSNGSV. The tract at residues 84–108 is disordered; sequence HGSGNSSSKKVTSSTSSSSSNGSVD. Residue Ser216 is modified to Phosphoserine.

It belongs to the VPS26 family. Component of the retromer complex which consists of VPS29, VPS26, VPS35, VPS5 and VPS17. Component of a retromer subcomplex consisting of VPS29, VPS26 and VPS35.

Plays a role in vesicular protein sorting. Required for the endosome-to-Golgi retrieval of the vacuolar protein sorting receptor VPS10. Component of the membrane-associated retromer complex which is essential in endosome-to-Golgi retrograde transport. The VPS29-VPS26-VPS35 subcomplex may be involved in cargo selection. The chain is Carboxypeptidase Y-deficient protein 8 (PEP8) from Saccharomyces cerevisiae (strain ATCC 204508 / S288c) (Baker's yeast).